The sequence spans 770 residues: Low-density lipoprotein receptor-related protein 3 (770 aa).

An N-terminal signal peptide occupies residues 1 to 36 (MEKRAAAGLEGAPGARAQLAVVCLVNIFLTGRLSSA). Residues 37 to 496 (VPALAACSGK…HGCLAAVPRK (460 aa)) are Extracellular-facing. Intrachain disulfides connect Cys43–Cys72, Cys99–Cys120, Cys166–Cys178, Cys173–Cys191, Cys185–Cys200, Cys212–Cys227, Cys219–Cys240, Cys234–Cys249, and Cys254–Cys282. One can recognise a CUB 1 domain in the interval 43–159 (CSGKLEQHTE…QGFRLSYIRG (117 aa)). Asn71 carries N-linked (GlcNAc...) asparagine glycosylation. 2 consecutive LDL-receptor class A domains span residues 165–201 (SCQA…GNCS) and 211–250 (LCPG…AGCP). A glycan (N-linked (GlcNAc...) asparagine) is linked at Asn199. Positions 254-365 (CGRRLGSFYG…HGFNATYQVK (112 aa)) constitute a CUB 2 domain. Asn359 carries N-linked (GlcNAc...) asparagine glycosylation. 2 LDL-receptor class A domains span residues 415-453 (ACPP…KNCF) and 454-490 (SCQP…HGCL). 6 cysteine pairs are disulfide-bonded: Cys416–Cys430, Cys423–Cys443, Cys437–Cys452, Cys455–Cys467, Cys462–Cys480, and Cys474–Cys489. A helical transmembrane segment spans residues 497–517 (VITAALIGSLVCGLLLVIALG). The Cytoplasmic portion of the chain corresponds to 518–770 (CAFKLYSLRT…ASDDEALLVC (253 aa)). The interval 635-770 (LGDGFLQPAP…ASDDEALLVC (136 aa)) is disordered. The span at 689-707 (RDPECRPVDKDRKVCREPL) shows a compositional bias: basic and acidic residues. Residues 729 to 738 (QVSTASSTLG) are compositionally biased toward polar residues. A compositionally biased stretch (acidic residues) spans 761 to 770 (ASDDEALLVC).

Belongs to the LDLR family. In terms of assembly, binds GGA1 and GGA2. Widely expressed. Highly expressed in skeletal muscle and ovary. Expressed at intermediate level in heart, brain, liver, pancreas, prostate and small intestine. Weakly expressed in testis, colon and leukocyte.

Its subcellular location is the membrane. The protein localises to the coated pit. In terms of biological role, probable receptor, which may be involved in the internalization of lipophilic molecules and/or signal transduction. Its precise role is however unclear, since it does not bind to very low density lipoprotein (VLDL) or to LRPAP1 in vitro. The protein is Low-density lipoprotein receptor-related protein 3 (LRP3) of Homo sapiens (Human).